Reading from the N-terminus, the 379-residue chain is Cytochrome b (379 aa).

4 consecutive transmembrane segments (helical) span residues 33–53 (FGSLLGMCLVIQILTGLFLAM), 77–98 (WLIRYLHANGASMFFICLFIHV), 113–133 (WNIGIILLLTTMATAFVGYVL), and 178–198 (FFAFHFILPFIIAAFALVHLL). The heme b site is built by His-83 and His-97. Residues His-182 and His-196 each contribute to the heme b site. His-201 is an a ubiquinone binding site. The next 4 membrane-spanning stretches (helical) occupy residues 226–246 (IKDLLGIFLLLLVLMTLALFF), 288–308 (LGGVLALVLSILILAAFPLLN), 320–340 (VTQTIYWIFIANLLVLTWIGG), and 347–367 (FTTIGQIASITYFTIIIILIP).

This sequence belongs to the cytochrome b family. As to quaternary structure, the cytochrome bc1 complex contains 11 subunits: 3 respiratory subunits (MT-CYB, CYC1 and UQCRFS1), 2 core proteins (UQCRC1 and UQCRC2) and 6 low-molecular weight proteins (UQCRH/QCR6, UQCRB/QCR7, UQCRQ/QCR8, UQCR10/QCR9, UQCR11/QCR10 and a cleavage product of UQCRFS1). This cytochrome bc1 complex then forms a dimer. It depends on heme b as a cofactor.

The protein localises to the mitochondrion inner membrane. Component of the ubiquinol-cytochrome c reductase complex (complex III or cytochrome b-c1 complex) that is part of the mitochondrial respiratory chain. The b-c1 complex mediates electron transfer from ubiquinol to cytochrome c. Contributes to the generation of a proton gradient across the mitochondrial membrane that is then used for ATP synthesis. This chain is Cytochrome b (MT-CYB), found in Akodon lindberghi (Lindbergh's grass mouse).